The primary structure comprises 386 residues: IgA receptor (386 aa).

Positions 1-41 (MARKDTNKQYSLRKLKTGTASVAVAVAVLGAGFANQTEVKA) are cleaved as a signal peptide. The segment at 42-152 (AEIKKPQADS…QKKHQQEQQQ (111 aa)) is igA-binding. Basic and acidic residues-rich tracts occupy residues 79 to 88 (YADDKEKDPQ), 97 to 128 (QDLRKREGQYQDKIEELEKERKEKQERQEQLE), 134 to 166 (EADKHYQEQQKKHQQEQQQLEAEKQKLAKDKQI), 174 to 201 (LSRDLEASRAAKKELEAEHQKLKEEKQI), 209 to 221 (LSRDLEASREAKK), 233 to 243 (EHQKLKEDKQI), and 251 to 267 (LSRDLEASREAKKKVEA). Disordered stretches follow at residues 79–221 (YADD…EAKK) and 233–268 (EHQKLKEDKQISDASRQGLSRDLEASREAKKKVEAD). C repeat units lie at residues 158–192 (QKLAKDKQISDASRQGLSRDLEASRAAKKELEAEH), 193–227 (QKLKEEKQISDASRQGLSRDLEASREAKKKVEADL), and 235–269 (QKLKEDKQISDASRQGLSRDLEASREAKKKVEADL). 4 D repeats span residues 302 to 307 (ARLEAE), 308 to 313 (AKALKE), 316 to 321 (AKQAEE), and 323 to 328 (AKLKGN). Residues 323 to 360 (AKLKGNQTPNAKVAPQANRSRSAMTQQKRTLPSTGETA) are disordered. Polar residues predominate over residues 339–359 (ANRSRSAMTQQKRTLPSTGET). The LPXTG sorting signal signature appears at 353 to 357 (LPSTG). The residue at position 356 (Thr-356) is a Pentaglycyl murein peptidoglycan amidated threonine. Positions 357-386 (GETANPFFTAAAATVMVSAGMLALKRKEEN) are cleaved as a propeptide — removed by sortase.

It belongs to the M protein family.

The protein localises to the secreted. It is found in the cell wall. Its function is as follows. Binds IgA of both subclasses, and also binds polyclonal IgG weakly. The sequence is that of IgA receptor (arp4) from Streptococcus pyogenes.